Reading from the N-terminus, the 89-residue chain is Cytochrome c oxidase subunit 7A, mitochondrial (89 aa).

The transit peptide at 1-31 (MMNLSRAVVRSFATTAGRRSAAVPKDQIEKG) directs the protein to the mitochondrion. Over 32–58 (YFEIRKVQEHFQKKDGKPVFLKGSVVD) the chain is Mitochondrial matrix. A helical membrane pass occupies residues 59 to 81 (NVLYRVTVALALVGIGGMGKLFY). Residues 82–89 (ELSVPKKE) are Mitochondrial intermembrane-facing.

The protein belongs to the cytochrome c oxidase VIIa family. As to quaternary structure, component of the cytochrome c oxidase (complex IV, CIV), a multisubunit enzyme composed of a catalytic core of 3 subunits and several supernumerary subunits. The complex exists as a monomer or a dimer and forms supercomplexes (SCs) in the inner mitochondrial membrane with ubiquinol-cytochrome c oxidoreductase (cytochrome b-c1 complex, complex III, CIII).

The protein resides in the mitochondrion inner membrane. It functions in the pathway energy metabolism; oxidative phosphorylation. In terms of biological role, component of the cytochrome c oxidase, the last enzyme in the mitochondrial electron transport chain which drives oxidative phosphorylation. The respiratory chain contains 3 multisubunit complexes succinate dehydrogenase (complex II, CII), ubiquinol-cytochrome c oxidoreductase (cytochrome b-c1 complex, complex III, CIII) and cytochrome c oxidase (complex IV, CIV), that cooperate to transfer electrons derived from NADH and succinate to molecular oxygen, creating an electrochemical gradient over the inner membrane that drives transmembrane transport and the ATP synthase. Cytochrome c oxidase is the component of the respiratory chain that catalyzes the reduction of oxygen to water. Electrons originating from reduced cytochrome c in the intermembrane space (IMS) are transferred via the dinuclear copper A center (CU(A)) of subunit 2 and heme A of subunit 1 to the active site in subunit 1, a binuclear center (BNC) formed by heme A3 and copper B (CU(B)). The BNC reduces molecular oxygen to 2 water molecules using 4 electrons from cytochrome c in the IMS and 4 protons from the mitochondrial matrix. The sequence is that of Cytochrome c oxidase subunit 7A, mitochondrial from Drosophila melanogaster (Fruit fly).